We begin with the raw amino-acid sequence, 165 residues long: Phosphopantetheine adenylyltransferase (165 aa).

Ser10 lines the substrate pocket. Residues 10-11 (SF) and His18 each bind ATP. The substrate site is built by Lys42, Leu74, and Arg88. Residues 89–91 (GLR), Glu99, and 124–130 (YSFLSSS) each bind ATP.

It belongs to the bacterial CoaD family. In terms of assembly, homohexamer. Mg(2+) is required as a cofactor.

It localises to the cytoplasm. The enzyme catalyses (R)-4'-phosphopantetheine + ATP + H(+) = 3'-dephospho-CoA + diphosphate. Its pathway is cofactor biosynthesis; coenzyme A biosynthesis; CoA from (R)-pantothenate: step 4/5. Its function is as follows. Reversibly transfers an adenylyl group from ATP to 4'-phosphopantetheine, yielding dephospho-CoA (dPCoA) and pyrophosphate. In Anoxybacillus flavithermus (strain DSM 21510 / WK1), this protein is Phosphopantetheine adenylyltransferase.